The following is a 182-amino-acid chain: uncharacterized protein (182 aa).

Residues 36–164 (LRHRATYIVV…TPDSLKALSL (129 aa)) enclose the Nudix hydrolase domain. The Nudix box signature appears at 73–95 (GGVVQSGENYLESARREAEEELG). Residues Glu89 and Glu93 each contribute to the Mg(2+) site.

This sequence belongs to the Nudix hydrolase family. It depends on Mg(2+) as a cofactor.

This is an uncharacterized protein from Yersinia pestis.